We begin with the raw amino-acid sequence, 235 residues long: 2-C-methyl-D-erythritol 4-phosphate cytidylyltransferase (235 aa).

This sequence belongs to the IspD/TarI cytidylyltransferase family. IspD subfamily. Homodimer.

It catalyses the reaction 2-C-methyl-D-erythritol 4-phosphate + CTP + H(+) = 4-CDP-2-C-methyl-D-erythritol + diphosphate. It participates in isoprenoid biosynthesis; isopentenyl diphosphate biosynthesis via DXP pathway; isopentenyl diphosphate from 1-deoxy-D-xylulose 5-phosphate: step 2/6. Its function is as follows. Catalyzes the formation of 4-diphosphocytidyl-2-C-methyl-D-erythritol from CTP and 2-C-methyl-D-erythritol 4-phosphate (MEP). This is 2-C-methyl-D-erythritol 4-phosphate cytidylyltransferase from Serratia proteamaculans (strain 568).